We begin with the raw amino-acid sequence, 719 residues long: Polyribonucleotide nucleotidyltransferase (719 aa).

Mg(2+) contacts are provided by Asp-495 and Asp-501. One can recognise a KH domain in the interval 562 to 621 (PRRLSFRIDPELIGTVIGPGGRTIKGITERTNTKIDIEDTGIVTVASHDGAAAEEAQKII). Residues 631-699 (GEYFDGKVTR…NRGRINLTLR (69 aa)) enclose the S1 motif domain. A disordered region spans residues 699–719 (RGVPQDGSDPQPTVILPIGES).

This sequence belongs to the polyribonucleotide nucleotidyltransferase family. Mg(2+) is required as a cofactor.

Its subcellular location is the cytoplasm. The enzyme catalyses RNA(n+1) + phosphate = RNA(n) + a ribonucleoside 5'-diphosphate. In terms of biological role, involved in mRNA degradation. Catalyzes the phosphorolysis of single-stranded polyribonucleotides processively in the 3'- to 5'-direction. The chain is Polyribonucleotide nucleotidyltransferase from Synechococcus sp. (strain RCC307).